Reading from the N-terminus, the 211-residue chain is Imidazole glycerol phosphate synthase subunit HisH (211 aa).

In terms of domain architecture, Glutamine amidotransferase type-1 spans 1 to 206; it reads MIGIIDYGRG…GKWVNEDATV (206 aa). Cys79 functions as the Nucleophile in the catalytic mechanism. Residues His181 and Glu183 contribute to the active site.

As to quaternary structure, heterodimer of HisH and HisF.

It localises to the cytoplasm. It catalyses the reaction 5-[(5-phospho-1-deoxy-D-ribulos-1-ylimino)methylamino]-1-(5-phospho-beta-D-ribosyl)imidazole-4-carboxamide + L-glutamine = D-erythro-1-(imidazol-4-yl)glycerol 3-phosphate + 5-amino-1-(5-phospho-beta-D-ribosyl)imidazole-4-carboxamide + L-glutamate + H(+). It carries out the reaction L-glutamine + H2O = L-glutamate + NH4(+). It functions in the pathway amino-acid biosynthesis; L-histidine biosynthesis; L-histidine from 5-phospho-alpha-D-ribose 1-diphosphate: step 5/9. IGPS catalyzes the conversion of PRFAR and glutamine to IGP, AICAR and glutamate. The HisH subunit catalyzes the hydrolysis of glutamine to glutamate and ammonia as part of the synthesis of IGP and AICAR. The resulting ammonia molecule is channeled to the active site of HisF. In Desulfitobacterium hafniense (strain DSM 10664 / DCB-2), this protein is Imidazole glycerol phosphate synthase subunit HisH.